A 466-amino-acid polypeptide reads, in one-letter code: Glutamate--tRNA ligase (466 aa).

Residues 10-20 (PSPTGYLHVGG) carry the 'HIGH' region motif. 4 residues coordinate Zn(2+): Cys-99, Cys-101, Cys-126, and His-128. The 'KMSKS' region motif lies at 237-241 (RLSKR). Lys-240 contacts ATP.

Belongs to the class-I aminoacyl-tRNA synthetase family. Glutamate--tRNA ligase type 1 subfamily. Monomer. The cofactor is Zn(2+).

The protein resides in the cytoplasm. It catalyses the reaction tRNA(Glu) + L-glutamate + ATP = L-glutamyl-tRNA(Glu) + AMP + diphosphate. In terms of biological role, catalyzes the attachment of glutamate to tRNA(Glu) in a two-step reaction: glutamate is first activated by ATP to form Glu-AMP and then transferred to the acceptor end of tRNA(Glu). The chain is Glutamate--tRNA ligase from Trichlorobacter lovleyi (strain ATCC BAA-1151 / DSM 17278 / SZ) (Geobacter lovleyi).